The primary structure comprises 230 residues: Probable septum site-determining protein MinC (230 aa).

It belongs to the MinC family. In terms of assembly, interacts with MinD and FtsZ.

Its function is as follows. Cell division inhibitor that blocks the formation of polar Z ring septums. Rapidly oscillates between the poles of the cell to destabilize FtsZ filaments that have formed before they mature into polar Z rings. Prevents FtsZ polymerization. The protein is Probable septum site-determining protein MinC of Rhodopseudomonas palustris (strain BisA53).